A 65-amino-acid polypeptide reads, in one-letter code: Muscarinic toxin-like protein 3 (65 aa).

4 disulfide bridges follow: C3–C24, C17–C41, C45–C57, and C58–C63.

As to quaternary structure, homodimer; non-covalently linked. As to expression, expressed by the venom gland.

Its subcellular location is the secreted. In terms of biological role, antagonist of muscle and neuronal nicotinic acetylcholine receptors (nAChR) with highest affinity for neuronal alpha-7/CHRNA7 nAChRs. This Naja kaouthia (Monocled cobra) protein is Muscarinic toxin-like protein 3.